The primary structure comprises 354 residues: DNA integrity scanning protein DisA (354 aa).

The region spanning 6 to 144 is the DAC domain; the sequence is GMKIKDTLKI…GDIKYVLRDS (139 aa). ATP contacts are provided by residues Gly73, Leu91, and 104–108; that span reads TRHRT.

It belongs to the DisA family. In terms of assembly, homooctamer. Mg(2+) is required as a cofactor.

It carries out the reaction 2 ATP = 3',3'-c-di-AMP + 2 diphosphate. In terms of biological role, participates in a DNA-damage check-point that is active prior to asymmetric division when DNA is damaged. DisA forms globular foci that rapidly scan along the chromosomes during sporulation, searching for lesions. When a lesion is present, DisA pauses at the lesion site. This triggers a cellular response that culminates in a temporary block in sporulation initiation. Functionally, also has diadenylate cyclase activity, catalyzing the condensation of 2 ATP molecules into cyclic di-AMP (c-di-AMP). c-di-AMP acts as a signaling molecule that couples DNA integrity with progression of sporulation. The rise in c-di-AMP level generated by DisA while scanning the chromosome, operates as a positive signal that advances sporulation; upon encountering a lesion, the DisA focus arrests at the damaged site and halts c-di-AMP synthesis. The polypeptide is DNA integrity scanning protein DisA (Clostridium botulinum (strain Eklund 17B / Type B)).